Reading from the N-terminus, the 408-residue chain is Imidazolonepropionase (408 aa).

Fe(3+) contacts are provided by histidine 73 and histidine 75. Positions 73 and 75 each coordinate Zn(2+). 3 residues coordinate 4-imidazolone-5-propanoate: arginine 82, tyrosine 145, and histidine 178. Tyrosine 145 lines the N-formimidoyl-L-glutamate pocket. Histidine 243 is a Fe(3+) binding site. Histidine 243 serves as a coordination point for Zn(2+). Glutamine 246 contributes to the 4-imidazolone-5-propanoate binding site. Position 318 (aspartate 318) interacts with Fe(3+). Aspartate 318 contacts Zn(2+). 2 residues coordinate N-formimidoyl-L-glutamate: asparagine 320 and glycine 322. Serine 323 is a 4-imidazolone-5-propanoate binding site.

Belongs to the metallo-dependent hydrolases superfamily. HutI family. Zn(2+) is required as a cofactor. Requires Fe(3+) as cofactor.

It is found in the cytoplasm. It catalyses the reaction 4-imidazolone-5-propanoate + H2O = N-formimidoyl-L-glutamate. It participates in amino-acid degradation; L-histidine degradation into L-glutamate; N-formimidoyl-L-glutamate from L-histidine: step 3/3. In terms of biological role, catalyzes the hydrolytic cleavage of the carbon-nitrogen bond in imidazolone-5-propanoate to yield N-formimidoyl-L-glutamate. It is the third step in the universal histidine degradation pathway. The polypeptide is Imidazolonepropionase (Shewanella baltica (strain OS155 / ATCC BAA-1091)).